Here is a 418-residue protein sequence, read N- to C-terminus: MYQSPRGTEDILPEDQPYWHFVRQQAARIAALYGYQRTDTPVFEDAGLFVRSVGEGTDIVSKEMYTFEDRGGDKLTLRPEGTAPVCRAYLEHGMQTRTKPVKLYYLSSIFRYDRPQAGRYRQHHQFGFEAIGEADASLDAEIIEMAWSFYNLLGITDLSLELNSIGCRQCRPNYISALKDYYQQHAGKLCPDCNTRLDKNTLRLLDCKRAECQAVAGNAPRSADYLCPDCLAHYSRLKECLTILDLPFHENFRLVRGLDYYSRTVFEIQPMAEGAQSTIGGGGRYDGLIEQLGGEATPAMGFATGIERIILNLKRQGIVPSPLPSPAVFLAYMGETASLASFALASDLRKAGIGIYQTYAQKSIKAQLRQANSLGVDWVVILGEEELKQGCAVLRNMKEAGQANIPLDQLICEIKKQI.

This sequence belongs to the class-II aminoacyl-tRNA synthetase family. In terms of assembly, homodimer.

The protein localises to the cytoplasm. It catalyses the reaction tRNA(His) + L-histidine + ATP = L-histidyl-tRNA(His) + AMP + diphosphate + H(+). The polypeptide is Histidine--tRNA ligase (Dehalococcoides mccartyi (strain ATCC BAA-2100 / JCM 16839 / KCTC 5957 / BAV1)).